A 372-amino-acid chain; its full sequence is 3-dehydroquinate synthase (372 aa).

Residues 116 to 120 (GVVGD), 140 to 141 (TT), Lys153, Lys162, and 180 to 183 (TLNT) each bind NAD(+). Zn(2+) is bound by residues Glu195, His260, and His277.

Belongs to the sugar phosphate cyclases superfamily. Dehydroquinate synthase family. It depends on Co(2+) as a cofactor. Requires Zn(2+) as cofactor. NAD(+) is required as a cofactor.

Its subcellular location is the cytoplasm. The catalysed reaction is 7-phospho-2-dehydro-3-deoxy-D-arabino-heptonate = 3-dehydroquinate + phosphate. It functions in the pathway metabolic intermediate biosynthesis; chorismate biosynthesis; chorismate from D-erythrose 4-phosphate and phosphoenolpyruvate: step 2/7. In terms of biological role, catalyzes the conversion of 3-deoxy-D-arabino-heptulosonate 7-phosphate (DAHP) to dehydroquinate (DHQ). This is 3-dehydroquinate synthase from Prochlorococcus marinus (strain MIT 9303).